The sequence spans 382 residues: D-galactonate dehydratase (382 aa).

Asp183 lines the Mg(2+) pocket. Catalysis depends on His185, which acts as the Proton donor. Residues Glu209 and Glu235 each contribute to the Mg(2+) site. His285 serves as the catalytic Proton acceptor.

Belongs to the mandelate racemase/muconate lactonizing enzyme family. GalD subfamily. Requires Mg(2+) as cofactor.

It catalyses the reaction D-galactonate = 2-dehydro-3-deoxy-D-galactonate + H2O. Its pathway is carbohydrate acid metabolism; D-galactonate degradation; D-glyceraldehyde 3-phosphate and pyruvate from D-galactonate: step 1/3. In terms of biological role, catalyzes the dehydration of D-galactonate to 2-keto-3-deoxy-D-galactonate. The sequence is that of D-galactonate dehydratase from Escherichia coli (strain UTI89 / UPEC).